A 67-amino-acid chain; its full sequence is Large ribosomal subunit protein bL35 (67 aa).

The protein belongs to the bacterial ribosomal protein bL35 family.

The sequence is that of Large ribosomal subunit protein bL35 from Rhizorhabdus wittichii (strain DSM 6014 / CCUG 31198 / JCM 15750 / NBRC 105917 / EY 4224 / RW1) (Sphingomonas wittichii).